Reading from the N-terminus, the 171-residue chain is UPF0398 protein STER_0279 (171 aa).

Belongs to the UPF0398 family.

This chain is UPF0398 protein STER_0279, found in Streptococcus thermophilus (strain ATCC BAA-491 / LMD-9).